We begin with the raw amino-acid sequence, 108 residues long: MWDETVAGPKPEHGLGRLRNKITTQPLDIKGVGEGSSSKTVAAVAGSPGTPTTPGSARKENVWRSVFHPGSNIATRGMGTNLFDKPSHPNSPTVYDWLYSDDTRSKHR.

The disordered stretch occupies residues 28–59; the sequence is DIKGVGEGSSSKTVAAVAGSPGTPTTPGSARK. Residue serine 47 is modified to Phosphoserine. Threonine 50 is modified (phosphothreonine).

Belongs to the DRM1/ARP family. In terms of tissue distribution, expressed mainly in the low bolt.

This chain is Dormancy-associated protein homolog 1, found in Arabidopsis thaliana (Mouse-ear cress).